A 351-amino-acid polypeptide reads, in one-letter code: Foldase protein PrsA 1 (351 aa).

A signal peptide spans 1–22 (MKNSNKLIASVVTLASVMALAA). A lipid anchor (N-palmitoyl cysteine) is attached at Cys-23. Cys-23 carries the S-diacylglycerol cysteine lipid modification. One can recognise a PpiC domain in the interval 145-240 (TPTMAVEMIT…KKFYIVKVTK (96 aa)). 2 stretches are compositionally biased toward low complexity: residues 303 to 317 (KTKA…SESS) and 326 to 351 (ESEQ…PAAQ). The tract at residues 303–351 (KTKAASESSTTSESSKAAEENPSESEQTQTSSAEEPTETEAQTQEPAAQ) is disordered.

It belongs to the PrsA family.

The protein localises to the cell membrane. It carries out the reaction [protein]-peptidylproline (omega=180) = [protein]-peptidylproline (omega=0). In terms of biological role, plays a major role in protein secretion by helping the post-translocational extracellular folding of several secreted proteins. The sequence is that of Foldase protein PrsA 1 (prsA1) from Streptococcus pyogenes serotype M18 (strain MGAS8232).